Reading from the N-terminus, the 99-residue chain is Goannatyrotoxin-Vere1 (99 aa).

The N-terminal stretch at 1-28 is a signal peptide; sequence MIASMKPWPLVMVAALCILFCLGTLVDA. A Tyrosine amide modification is found at tyrosine 64. Residues 68–99 constitute a propeptide, C-terminal extension; sequence SSPETLMSELIFGENSNSDHSSRSRFDDSYMW.

The protein belongs to the NPY family. As to expression, expressed by the mandibular venom gland.

Its subcellular location is the secreted. Shows a potent unique triphasic action, rapid biphasic hypertension followed by prolonged hypotension. This is Goannatyrotoxin-Vere1 from Varanus eremius (Rusty desert monitor).